The sequence spans 238 residues: E3 ubiquitin-protein ligase ZNRF2 (238 aa).

The segment at 1–137 (MGAKQSGPAA…AGGGPGGPRL (137 aa)) is disordered. Gly2 is lipidated: N-myristoyl glycine. A phosphoserine mark is found at Ser20, Ser24, Ser75, Ser82, Ser107, Ser110, Ser141, Ser147, and Ser189. Residues 35–77 (GARAARFAAPVSGAQQPSASAGAAAAAAAAASAPAAPRSRSLG) are compositionally biased toward low complexity. Residues 195–236 (CAICLEELQQGDTIARLPCLCIYHKGCIDEWFEVNRSCPEHP) form an RING-type; atypical zinc finger.

As to quaternary structure, interacts with UBE2N. Interacts with ZNRF1. Interacts (when phosphorylated) with YWHAE. Phosphorylated; leading to binding to YWHAE. Phosphorylated by MTOR at Ser-147 and dephosphorylated by PP6C. Ser-147 phosphorylation stimulates vesicle-to-cytosol translocation. Expressed primarily in the nervous system. Expression is more intense in the granular cell layer of hippocampus, Purkinje cell layer of the cerebellum and the granular cell layer of the olfactory bulb. Detected in sensory neurons but not expressed in sympatic or enteric neurons. Expressed in testis, adipose tissue, columnar epithelial cells of the gut.

The protein localises to the endosome membrane. The protein resides in the lysosome membrane. Its subcellular location is the presynaptic cell membrane. It localises to the cytoplasm. It catalyses the reaction S-ubiquitinyl-[E2 ubiquitin-conjugating enzyme]-L-cysteine + [acceptor protein]-L-lysine = [E2 ubiquitin-conjugating enzyme]-L-cysteine + N(6)-ubiquitinyl-[acceptor protein]-L-lysine.. It functions in the pathway protein modification; protein ubiquitination. Its function is as follows. E3 ubiquitin-protein ligase that plays a role in the establishment and maintenance of neuronal transmission and plasticity. Ubiquitinates the Na(+)/K(+) ATPase alpha-1 subunit/ATP1A1 and thereby influences its endocytosis and/or degradation. Also acts as a positive regulator of mTORC1 activation by amino acids, which functions upstream of the V-ATPase and of Rag-GTPases. In turn, phosphorylation by mTOR leads to its inhibition via targeting to the cytosol allowing a self-regulating feedback mechanism. In Mus musculus (Mouse), this protein is E3 ubiquitin-protein ligase ZNRF2 (Znrf2).